Consider the following 345-residue polypeptide: Isocitrate lyase (345 aa).

58–60 (SGY) is a binding site for substrate. Position 98 (Asp98) interacts with Mg(2+). Cys135 functions as the Proton acceptor in the catalytic mechanism. Residues 136–137 (GH), Arg170, 230–234 (NYSSS), and Thr260 contribute to the substrate site. The tract at residues 318–345 (DPEARRRIEESEGFSEEQADPITSNDDD) is disordered. A compositionally biased stretch (acidic residues) spans 328 to 345 (SEGFSEEQADPITSNDDD).

In terms of assembly, homotetramer or homotrimer. It depends on Mg(2+) as a cofactor.

The enzyme catalyses D-threo-isocitrate = glyoxylate + succinate. The protein operates within carbohydrate metabolism; glyoxylate cycle; (S)-malate from isocitrate: step 1/2. Functionally, involved in the metabolic adaptation in response to environmental changes. Catalyzes the reversible formation of succinate and glyoxylate from isocitrate, a key step of the glyoxylate cycle, which operates as an anaplerotic route for replenishing the tricarboxylic acid cycle during growth on fatty acid substrates. In Haloferax volcanii (strain ATCC 29605 / DSM 3757 / JCM 8879 / NBRC 14742 / NCIMB 2012 / VKM B-1768 / DS2) (Halobacterium volcanii), this protein is Isocitrate lyase (aceA).